We begin with the raw amino-acid sequence, 360 residues long: Phospho-N-acetylmuramoyl-pentapeptide-transferase (360 aa).

The next 10 helical transmembrane spans lie at 16–36 (FAVF…ALVL), 73–93 (TMGG…WADL), 97–117 (YVWV…VDDY), 134–154 (YFWQ…TAST), 168–188 (YSIP…VGSS), 199–219 (GLAI…CYLS), 236–256 (AGEL…FLWF), 263–283 (VFMG…IAVI), 288–308 (IVLF…VIQV), and 338–358 (VIVR…ATLK).

Belongs to the glycosyltransferase 4 family. MraY subfamily. The cofactor is Mg(2+).

It is found in the cell inner membrane. It catalyses the reaction UDP-N-acetyl-alpha-D-muramoyl-L-alanyl-gamma-D-glutamyl-meso-2,6-diaminopimeloyl-D-alanyl-D-alanine + di-trans,octa-cis-undecaprenyl phosphate = di-trans,octa-cis-undecaprenyl diphospho-N-acetyl-alpha-D-muramoyl-L-alanyl-D-glutamyl-meso-2,6-diaminopimeloyl-D-alanyl-D-alanine + UMP. Its pathway is cell wall biogenesis; peptidoglycan biosynthesis. Its function is as follows. Catalyzes the initial step of the lipid cycle reactions in the biosynthesis of the cell wall peptidoglycan: transfers peptidoglycan precursor phospho-MurNAc-pentapeptide from UDP-MurNAc-pentapeptide onto the lipid carrier undecaprenyl phosphate, yielding undecaprenyl-pyrophosphoryl-MurNAc-pentapeptide, known as lipid I. The chain is Phospho-N-acetylmuramoyl-pentapeptide-transferase from Pseudomonas fluorescens (strain Pf0-1).